The sequence spans 132 residues: Small ribosomal subunit protein uS11 (132 aa).

Belongs to the universal ribosomal protein uS11 family. Part of the 30S ribosomal subunit. Interacts with proteins S7 and S18. Binds to IF-3.

Functionally, located on the platform of the 30S subunit, it bridges several disparate RNA helices of the 16S rRNA. Forms part of the Shine-Dalgarno cleft in the 70S ribosome. The chain is Small ribosomal subunit protein uS11 from Legionella pneumophila (strain Corby).